A 390-amino-acid chain; its full sequence is Fluoride export protein 1 (390 aa).

Residues 1 to 22 form a disordered region; sequence MVAPLVSESQSSSIEETDEQQQ. The Cytoplasmic segment spans residues 1 to 72; that stretch reads MVAPLVSESQ…RFLDKTQKYY (72 aa). A helical transmembrane segment spans residues 73-93; the sequence is PVILNIVHGAIWGVLVRKGLM. The Extracellular segment spans residues 94 to 100; that stretch reads SLTTYSG. Residues 101 to 121 form a helical membrane-spanning segment; it reads SFLSGVIWANFAACVVMGLAI. Over 122 to 143 the chain is Cytoplasmic; that stretch reads DGEVFWIRLLEEKDYPNKGAIP. The chain crosses the membrane as a helical span at residues 144–164; that stretch reads VYTGLTTGFCGTVSSFSSVIL. At 165-185 the chain is on the extracellular side; sequence EAFNKAADTDIGVRHHYPNGA. Residues 186 to 206 form a helical membrane-spanning segment; the sequence is YGIMQFLAVILAQFGLSIMGF. The Cytoplasmic portion of the chain corresponds to 207–229; that stretch reads HMGKQFSAVVDNYLPLVTKRIYK. A helical membrane pass occupies residues 230-250; sequence VLELTSMILGVVLVVITCILI. At 251–256 the chain is on the extracellular side; it reads GVKKQG. The chain crosses the membrane as a helical span at residues 257-279; that stretch reads SWRSWTFSMLFAPFGALLRYYLS. Over 280-290 the chain is Cytoplasmic; that stretch reads KFLNNKVSNFP. A helical transmembrane segment spans residues 291 to 311; the sequence is LGTFTANFLGTLLLAVFTLLA. At 312 to 338 the chain is on the extracellular side; that stretch reads RGKLPGGKGHIVTNTIALHVLEGLDDG. The helical transmembrane segment at 339–359 threads the bilayer; it reads FCGGLTTVSTFVVELFGLKTL. Residues 360 to 368 lie on the Cytoplasmic side of the membrane; that stretch reads FSYRYGTIS. The chain crosses the membrane as a helical span at residues 369–389; it reads ILVCFAGVVLILGSYNWSVGL. Asp-390 is a topological domain (extracellular).

The protein belongs to the fluoride channel Fluc/FEX (TC 1.A.43) family.

The protein resides in the cell membrane. The catalysed reaction is fluoride(in) = fluoride(out). Fluoride channel required for the rapid expulsion of cytoplasmic fluoride. The chain is Fluoride export protein 1 from Candida albicans (strain SC5314 / ATCC MYA-2876) (Yeast).